Consider the following 293-residue polypeptide: Ribosomal protein L11 methyltransferase (293 aa).

Residues threonine 145, glycine 166, aspartate 188, and asparagine 230 each contribute to the S-adenosyl-L-methionine site.

It belongs to the methyltransferase superfamily. PrmA family.

The protein localises to the cytoplasm. The catalysed reaction is L-lysyl-[protein] + 3 S-adenosyl-L-methionine = N(6),N(6),N(6)-trimethyl-L-lysyl-[protein] + 3 S-adenosyl-L-homocysteine + 3 H(+). In terms of biological role, methylates ribosomal protein L11. In Shewanella baltica (strain OS155 / ATCC BAA-1091), this protein is Ribosomal protein L11 methyltransferase.